The primary structure comprises 518 residues: Glucan 1,4-alpha-maltohexaosidase (518 aa).

Residues 1–33 form the signal peptide; the sequence is MKMRTGKKGFLSILLAFLLVITSIPFTLVDVEA. Asparagine 139, aspartate 196, alanine 219, aspartate 221, aspartate 232, aspartate 238, aspartate 240, and aspartate 242 together coordinate Ca(2+). A Na(+)-binding site is contributed by aspartate 196. 3 residues coordinate Na(+): aspartate 221, aspartate 232, and aspartate 238. Aspartate 269 functions as the Nucleophile in the catalytic mechanism. Position 273 (histidine 273) interacts with Ca(2+). The active-site Proton donor is glutamate 299.

This sequence belongs to the glycosyl hydrolase 13 family. Ca(2+) serves as cofactor. The cofactor is Na(+).

It localises to the secreted. The enzyme catalyses Hydrolysis of (1-&gt;4)-alpha-D-glucosidic linkages in amylaceous polysaccharides, to remove successive maltohexaose residues from the non-reducing chain ends.. Its pathway is glycan degradation; starch degradation. The polypeptide is Glucan 1,4-alpha-maltohexaosidase (Bacillus sp. (strain 707)).